The chain runs to 373 residues: Phosphoserine aminotransferase (373 aa).

L-glutamate is bound at residue R46. Residues F104, T150, D172, and Q195 each contribute to the pyridoxal 5'-phosphate site. K196 carries the N6-(pyridoxal phosphate)lysine modification. 247–248 (NT) serves as a coordination point for pyridoxal 5'-phosphate.

Belongs to the class-V pyridoxal-phosphate-dependent aminotransferase family. SerC subfamily. Homodimer. It depends on pyridoxal 5'-phosphate as a cofactor.

The protein localises to the cytoplasm. It catalyses the reaction O-phospho-L-serine + 2-oxoglutarate = 3-phosphooxypyruvate + L-glutamate. The catalysed reaction is 4-(phosphooxy)-L-threonine + 2-oxoglutarate = (R)-3-hydroxy-2-oxo-4-phosphooxybutanoate + L-glutamate. The protein operates within amino-acid biosynthesis; L-serine biosynthesis; L-serine from 3-phospho-D-glycerate: step 2/3. Its pathway is cofactor biosynthesis; pyridoxine 5'-phosphate biosynthesis; pyridoxine 5'-phosphate from D-erythrose 4-phosphate: step 3/5. Functionally, catalyzes the reversible conversion of 3-phosphohydroxypyruvate to phosphoserine and of 3-hydroxy-2-oxo-4-phosphonooxybutanoate to phosphohydroxythreonine. The chain is Phosphoserine aminotransferase from Rhodococcus opacus (strain B4).